The chain runs to 293 residues: Bifunctional protein FolD (293 aa).

NADP(+)-binding positions include 166 to 168, Ser-191, and Ile-232; that span reads GRS.

This sequence belongs to the tetrahydrofolate dehydrogenase/cyclohydrolase family. Homodimer.

It catalyses the reaction (6R)-5,10-methylene-5,6,7,8-tetrahydrofolate + NADP(+) = (6R)-5,10-methenyltetrahydrofolate + NADPH. The enzyme catalyses (6R)-5,10-methenyltetrahydrofolate + H2O = (6R)-10-formyltetrahydrofolate + H(+). It participates in one-carbon metabolism; tetrahydrofolate interconversion. Functionally, catalyzes the oxidation of 5,10-methylenetetrahydrofolate to 5,10-methenyltetrahydrofolate and then the hydrolysis of 5,10-methenyltetrahydrofolate to 10-formyltetrahydrofolate. This chain is Bifunctional protein FolD, found in Synechococcus sp. (strain JA-2-3B'a(2-13)) (Cyanobacteria bacterium Yellowstone B-Prime).